The chain runs to 628 residues: Phomenoic acid biosynthesis cluster MFS-type transporter (628 aa).

The next 14 membrane-spanning stretches (helical) occupy residues Ile-102 to Ala-122, Val-150 to Leu-170, Trp-174 to Pro-194, Val-204 to Asn-224, Ala-232 to Gly-252, Trp-262 to Leu-282, Phe-302 to Gly-322, Asn-329 to Val-349, Met-375 to Ile-395, Ala-407 to Val-427, Phe-435 to Phe-455, Gly-488 to Ile-508, Ile-524 to Ile-544, and Ala-595 to Phe-615.

It belongs to the major facilitator superfamily. TCR/Tet family.

It is found in the cell membrane. Its function is as follows. MFS-type transporter; part of the gene cluster that mediates the biosynthesis of phomenoic acid, a long chain aliphatic carboxylic acid that does not appear to be essential for pathogenicity but may play a role in allowing to outcompete other fungi in the environmental niche via its antifungal properties. Is probably involved in the efflux of phomenoic acid. In Leptosphaeria maculans (strain JN3 / isolate v23.1.3 / race Av1-4-5-6-7-8) (Blackleg fungus), this protein is Phomenoic acid biosynthesis cluster MFS-type transporter.